The sequence spans 206 residues: GCN5-like protein acetyltransferase Rv2170 (206 aa).

One can recognise an N-acetyltransferase domain in the interval 44 to 205 (EHIRRRGWQA…AFAILGRTLP (162 aa)). Tyr-176 serves as the catalytic Proton donor.

This sequence belongs to the acetyltransferase family.

It catalyses the reaction L-lysyl-[protein] + acetyl-CoA = N(6)-acetyl-L-lysyl-[protein] + CoA + H(+). The enzyme catalyses propanoyl-CoA + L-lysyl-[protein] = N(6)-propanoyl-L-lysyl-[protein] + CoA + H(+). The catalysed reaction is succinyl-CoA + L-lysyl-[protein] = N(6)-succinyl-L-lysyl-[protein] + CoA + H(+). Its function is as follows. Acetyltransferase involved in the post-translational regulation of the central metabolic enzyme isocitrate dehydrogenase 1 (ICDH-1) through lysine acetylation. Catalyzes the acetylation of ICDH-1 at Lys-30 and Lys-129, using acetyl-CoA as a donor, leading to a reduction of ICDH-1 enzyme activity. Can also use propionyl-CoA and succinyl-CoA as donors. Cannot act on the isocitrate dehydrogenase 2 (ICDH-2). Might play a role in regulating the TCA cycle and methylcitrate cycle when M.tuberculosis utilizes fatty acid as carbon source. In terms of biological role, in addition, it can acetylate the amino group of isoniazid (INH), one of the first-line drugs used for the treatment of tuberculosis, thereby canceling out the drug toxicity. Acts by catalyzing the transfer of an acetyl group from acetyl-CoA to INH. Following acetylation, INH is broken down into isonicotinic acid and acetylhydrazine. M.smegmatis and M.tuberculosis H37Ra strains overexpressing Rv2170 are resistant to INH. Has little or no acetyltransferase activity with other antibiotics such as streptomycin, neomycin, kanamycin, amikacin, apramycin and gentamicin. The protein is GCN5-like protein acetyltransferase Rv2170 of Mycobacterium tuberculosis (strain ATCC 25618 / H37Rv).